Consider the following 346-residue polypeptide: [LysW]-lysine/[LysW]-ornithine hydrolase (346 aa).

His67 serves as a coordination point for Zn(2+). Residue Asp69 is part of the active site. Asp91 provides a ligand contact to Zn(2+). The Proton acceptor role is filled by Glu121. Residues Glu122, Glu145, and His316 each coordinate Zn(2+).

It belongs to the peptidase M20A family. LysK subfamily. Requires Zn(2+) as cofactor. Co(2+) serves as cofactor.

It localises to the cytoplasm. The enzyme catalyses [amino-group carrier protein]-C-terminal-gamma-(L-lysyl)-L-glutamate + H2O = [amino-group carrier protein]-C-terminal-L-glutamate + L-lysine. It catalyses the reaction [amino-group carrier protein]-C-terminal-gamma-(L-ornithyl)-L-glutamate + H2O = [amino-group carrier protein]-C-terminal-L-glutamate + L-ornithine. The protein operates within amino-acid biosynthesis; L-lysine biosynthesis via AAA pathway; L-lysine from L-alpha-aminoadipate (Thermus route): step 5/5. It functions in the pathway amino-acid biosynthesis; L-arginine biosynthesis. Functionally, catalyzes the release of L-lysine from [LysW]-gamma-L-lysine and the release of L-ornithine from [LysW]-L-ornithine. The sequence is that of [LysW]-lysine/[LysW]-ornithine hydrolase from Sulfurisphaera tokodaii (strain DSM 16993 / JCM 10545 / NBRC 100140 / 7) (Sulfolobus tokodaii).